A 363-amino-acid polypeptide reads, in one-letter code: Membrane-bound lytic murein transglycosylase C (363 aa).

The first 15 residues, 1–15, serve as a signal peptide directing secretion; sequence MKKYIVFAIIPFLFA. Residue Cys-16 is the site of N-palmitoyl cysteine attachment. Cys-16 carries the S-diacylglycerol cysteine lipid modification.

The protein belongs to the transglycosylase Slt family.

It is found in the cell outer membrane. The catalysed reaction is Exolytic cleavage of the (1-&gt;4)-beta-glycosidic linkage between N-acetylmuramic acid (MurNAc) and N-acetylglucosamine (GlcNAc) residues in peptidoglycan, from either the reducing or the non-reducing ends of the peptidoglycan chains, with concomitant formation of a 1,6-anhydrobond in the MurNAc residue.. Its function is as follows. Murein-degrading enzyme. May play a role in recycling of muropeptides during cell elongation and/or cell division. The sequence is that of Membrane-bound lytic murein transglycosylase C from Histophilus somni (strain 129Pt) (Haemophilus somnus).